We begin with the raw amino-acid sequence, 355 residues long: Protein RecA (355 aa).

An ATP-binding site is contributed by 72–79 (GPESSGKT).

This sequence belongs to the RecA family.

It is found in the cytoplasm. Functionally, can catalyze the hydrolysis of ATP in the presence of single-stranded DNA, the ATP-dependent uptake of single-stranded DNA by duplex DNA, and the ATP-dependent hybridization of homologous single-stranded DNAs. It interacts with LexA causing its activation and leading to its autocatalytic cleavage. This is Protein RecA from Wolbachia sp. subsp. Brugia malayi (strain TRS).